Here is a 319-residue protein sequence, read N- to C-terminus: Acetyl esterase (319 aa).

The short motif at 91–93 (HGG) is the Involved in the stabilization of the negatively charged intermediate by the formation of the oxyanion hole element. Catalysis depends on residues S165, D262, and H292.

The protein belongs to the 'GDXG' lipolytic enzyme family. In terms of assembly, homodimer. Interacts with MalT and MelA.

It is found in the cytoplasm. In terms of biological role, displays esterase activity towards short chain fatty esters (acyl chain length of up to 8 carbons). Able to hydrolyze triacetylglycerol (triacetin) and tributyrylglycerol (tributyrin), but not trioleylglycerol (triolein) or cholesterol oleate. Negatively regulates MalT activity by antagonizing maltotriose binding. Inhibits MelA galactosidase activity. The chain is Acetyl esterase from Shigella boydii serotype 4 (strain Sb227).